A 238-amino-acid chain; its full sequence is Protein E6 (238 aa).

Over residues 40–51 the composition is skewed to basic and acidic residues; that stretch reads KETTTREQKHET. 2 disordered regions span residues 40-64 and 210-238; these read KETTTREQKHETFVPQTTQKPEEQE and EFNENRYNNMGRYHQNQEEFEESEEEFEP. The span at 227-238 shows a compositional bias: acidic residues; the sequence is EEFEESEEEFEP.

It is predominantly expressed in fiber cells.

It is found in the secreted. It localises to the cell wall. This chain is Protein E6 (E6), found in Gossypium hirsutum (Upland cotton).